Here is a 235-residue protein sequence, read N- to C-terminus: MSDAKQNTPTKALVVFSGGQDSTTCLIQALSQYDEVHGITFDYGQRHRQEIEVAKSLATELKLASHKVMDTTLLNELAISALTRDAIPVSHELMNNGLPNTFVPGRNILFLTLAGIYAYQLGCDAIITGVCETDFSGYPDCRNEFVQSMQNSLALGMDKPLKIITPLMWLNKAETWALADKYQQLALVQHQTLTCYNGIVGKGCGDCPACVLRQRGLDDYLQNSQSVMDSLNSKL.

16 to 26 (FSGGQDSTTCL) is an ATP binding site. Residues Cys-195, Cys-204, Cys-207, and Cys-210 each coordinate Zn(2+).

It belongs to the QueC family. It depends on Zn(2+) as a cofactor.

The enzyme catalyses 7-carboxy-7-deazaguanine + NH4(+) + ATP = 7-cyano-7-deazaguanine + ADP + phosphate + H2O + H(+). It participates in purine metabolism; 7-cyano-7-deazaguanine biosynthesis. Catalyzes the ATP-dependent conversion of 7-carboxy-7-deazaguanine (CDG) to 7-cyano-7-deazaguanine (preQ(0)). The protein is 7-cyano-7-deazaguanine synthase of Shewanella frigidimarina (strain NCIMB 400).